A 510-amino-acid polypeptide reads, in one-letter code: MSGETYVGAIDQGTTGTRFMVFDHDGKVVANAYEKHEQIYPEPGWVEHDANEIWDNTKQVIDAALSSAGLDAEQLEAIGITNQRETTLVWDRETGQPIHNAIVWQDRRTTDRIETLEAEGKTDDVRAKTGLEPDAYFSATKAEWLLDNSDPIKLQRSRPEDIRDRAADGELAFGTIDTWLIYNLTGNHITDVTNASRTMLFNIHDMEWDDELLDEFNVPRELLPEVRPSSDDDYYGTTDADGFLGAEVPVAGALGDQQAALFGQTCFDAGDAKNTYGTGSFMLMNTGDEAVMSEHGLLTTVGFQRSGEPVQYALEGSIFITGAAIEWLEDMTLIDNAAESEKLARSVESTDGVYFVPAFTGLGAPHWDQRARGTIVGMTRGTRREHIVRATLESIAFQTRDVAEAMESDSEIDLSSLRVDGGAVKNNFLCQLQSNILDTEIVRPQVDETTALGAAYAAGLAVGYWETLDELRENWQVDREFAPKDPQNVEHRYGRWKEAVDRSLDWAREE.

Thr14 lines the ADP pocket. Thr14 and Thr15 together coordinate ATP. Thr14 provides a ligand contact to sn-glycerol 3-phosphate. Residue Arg18 coordinates ADP. Residues Arg84, Glu85, Tyr136, and Asp256 each coordinate sn-glycerol 3-phosphate. Residues Arg84, Glu85, Tyr136, Asp256, and Gln257 each contribute to the glycerol site. Positions 278, 322, 422, and 426 each coordinate ADP. Residues Thr278, Gly322, and Gly422 each contribute to the ATP site.

The protein belongs to the FGGY kinase family.

The catalysed reaction is glycerol + ATP = sn-glycerol 3-phosphate + ADP + H(+). It participates in polyol metabolism; glycerol degradation via glycerol kinase pathway; sn-glycerol 3-phosphate from glycerol: step 1/1. Its function is as follows. Key enzyme in the regulation of glycerol uptake and metabolism. Catalyzes the phosphorylation of glycerol to yield sn-glycerol 3-phosphate. It also catalyzes the phosphorylation of dihydroxyacetone (DHA). Involved, together with the DHA kinase DhaKLM, in the metabolism of DHA. In Haloferax volcanii (strain ATCC 29605 / DSM 3757 / JCM 8879 / NBRC 14742 / NCIMB 2012 / VKM B-1768 / DS2) (Halobacterium volcanii), this protein is Glycerol kinase.